The following is a 503-amino-acid chain: Endoglycoceramidase (503 aa).

A signal peptide spans 1-21; sequence MAETQPLVFVLMSISAILTAG. Residues N72, N108, and N205 are each glycosylated (N-linked (GlcNAc...) asparagine). E239 serves as the catalytic Proton donor. 3 N-linked (GlcNAc...) asparagine glycosylation sites follow: N307, N409, and N485.

The protein belongs to the glycosyl hydrolase 5 (cellulase A) family.

It localises to the secreted. Its subcellular location is the nematocyst. The enzyme catalyses an oligoglycosyl-(1-&gt;4)-beta-D-glucosyl-(1&lt;-&gt;1)-ceramide + H2O = an oligoglycosyl-(1-&gt;4)-D-glucose + an N-acyl-sphingoid base. With respect to regulation, completely inhibited by Hg(2+). Cu(2+) and zinc have no effect on enzyme activity. Lithium, potassium, manganese, Ni(2+), calcium, magnesium and EDTA have no significant effect on enzyme activity. Enzyme requires presence of detergents such as Triton X-100 and Lubrol PX for the hydrolysis of glycosphingolipids. Taurodeoxycholate strongly inhibits the enzyme activity and SDS completely inhibits the enzyme activity. In terms of biological role, hydrolysis of the glycosidic linkage between oligosaccharides and ceramides of glycosphingolipids, especially b-series polysialogangliosides. The chain is Endoglycoceramidase from Cyanea nozakii (Jellyfish).